A 216-amino-acid chain; its full sequence is N-(5'-phosphoribosyl)anthranilate isomerase (216 aa).

This sequence belongs to the TrpF family.

It carries out the reaction N-(5-phospho-beta-D-ribosyl)anthranilate = 1-(2-carboxyphenylamino)-1-deoxy-D-ribulose 5-phosphate. It participates in amino-acid biosynthesis; L-tryptophan biosynthesis; L-tryptophan from chorismate: step 3/5. The polypeptide is N-(5'-phosphoribosyl)anthranilate isomerase (Leptospira borgpetersenii serovar Hardjo-bovis (strain JB197)).